Reading from the N-terminus, the 118-residue chain is Large ribosomal subunit protein bL20 (118 aa).

It belongs to the bacterial ribosomal protein bL20 family.

Functionally, binds directly to 23S ribosomal RNA and is necessary for the in vitro assembly process of the 50S ribosomal subunit. It is not involved in the protein synthesizing functions of that subunit. This chain is Large ribosomal subunit protein bL20, found in Pseudomonas syringae pv. syringae (strain B728a).